Consider the following 100-residue polypeptide: ATP synthase subunit c (100 aa).

2 helical membrane passes run 27–47 and 72–92; these read SVIA…IGMG and FIAL…TLIV.

This sequence belongs to the ATPase C chain family. As to quaternary structure, F-type ATPases have 2 components, F(1) - the catalytic core - and F(0) - the membrane proton channel. F(1) has five subunits: alpha(3), beta(3), gamma(1), delta(1), epsilon(1). F(0) has three main subunits: a(1), b(2) and c(10-14). The alpha and beta chains form an alternating ring which encloses part of the gamma chain. F(1) is attached to F(0) by a central stalk formed by the gamma and epsilon chains, while a peripheral stalk is formed by the delta and b chains.

It localises to the cell inner membrane. Its function is as follows. F(1)F(0) ATP synthase produces ATP from ADP in the presence of a proton or sodium gradient. F-type ATPases consist of two structural domains, F(1) containing the extramembraneous catalytic core and F(0) containing the membrane proton channel, linked together by a central stalk and a peripheral stalk. During catalysis, ATP synthesis in the catalytic domain of F(1) is coupled via a rotary mechanism of the central stalk subunits to proton translocation. In Campylobacter curvus (strain 525.92), this protein is ATP synthase subunit c.